Consider the following 471-residue polypeptide: MATATATDRLSNLKSSVAGLNQISENEKSGFINLVARYLSGEAQHVEWSKIQTPTDEVVVPYDTLAPTPDGSLEIKNLLDKLVVLKLNGGLGTTMGCTGPKSVIEVRDGLTFLDLIVIQIENLNSKYGSNVPLLLMNSFNTHDDTQTIVEKYQNSNIEIHTFNQSQYPRLVVDDFLPLPSKGRTDKDGWYPPGHGSMFPSLSNSGKLDALISQGKEYVFVANSDNLGAIVDLKILNHLVAHKNEYCMEVTPKTLADVKGGTLISYEGRVQLLEIAQVPDEHVGEFKSIEKFKIFNTNNLWVNLKAIKRLVEADALKMEIIPNPKEVDGVKVLQLETAAGAAIRFFDKAIGINVPRSRFLPVKATSDLLLVQSDLYTVENGSVIRNKARTNPENPSIELGPEFKKVSNFLGRFKSIPSIVELDSLKVVGDVWFGTGVILKGKVSIVAKSGVKVEIPDGAVIANKEINGPKDL.

UTP contacts are provided by residues 87-90 (LNGG), K101, Q164, and G193. 89–90 (GG) serves as a coordination point for substrate. Residues H194 and 222–224 (NSD) each bind substrate. Residues D224 and K362 each coordinate UTP.

The protein belongs to the UDPGP type 1 family.

The protein localises to the cytoplasm. It catalyses the reaction alpha-D-glucose 1-phosphate + UTP + H(+) = UDP-alpha-D-glucose + diphosphate. Its function is as follows. Plays a central role as a glucosyl donor in cellular metabolic pathways. This Astragalus penduliflorus (Mountain lentil) protein is UTP--glucose-1-phosphate uridylyltransferase (UGP).